The sequence spans 182 residues: ATP synthase subunit b (182 aa).

The chain crosses the membrane as a helical span at residues 25-45; the sequence is VVLAGFAVLFYIVVKFVVPMF.

The protein belongs to the ATPase B chain family. F-type ATPases have 2 components, F(1) - the catalytic core - and F(0) - the membrane proton channel. F(1) has five subunits: alpha(3), beta(3), gamma(1), delta(1), epsilon(1). F(0) has three main subunits: a(1), b(2) and c(10-14). The alpha and beta chains form an alternating ring which encloses part of the gamma chain. F(1) is attached to F(0) by a central stalk formed by the gamma and epsilon chains, while a peripheral stalk is formed by the delta and b chains.

The protein localises to the cell membrane. Functionally, f(1)F(0) ATP synthase produces ATP from ADP in the presence of a proton or sodium gradient. F-type ATPases consist of two structural domains, F(1) containing the extramembraneous catalytic core and F(0) containing the membrane proton channel, linked together by a central stalk and a peripheral stalk. During catalysis, ATP synthesis in the catalytic domain of F(1) is coupled via a rotary mechanism of the central stalk subunits to proton translocation. In terms of biological role, component of the F(0) channel, it forms part of the peripheral stalk, linking F(1) to F(0). This is ATP synthase subunit b from Arthrobacter sp. (strain FB24).